Consider the following 197-residue polypeptide: MLMRTAQVTRNTQETQITVTINLDGQGKAELDSGVPFLDHMLDQIARHGMFDLSVAAKGDLHVDAHHTVEDIGITLGQALNRAVADKKGLVRYGHAYVPLDEALSRVVIDLSGRPGLQFNTTFTRAVIGNFDVDLIQEFFQGFVNHAMVTLHIDNLTGKNAHHQAETIFKAFGRALRMAVTTDPRCDNLIPSTKGVL.

This sequence belongs to the imidazoleglycerol-phosphate dehydratase family.

It is found in the cytoplasm. The catalysed reaction is D-erythro-1-(imidazol-4-yl)glycerol 3-phosphate = 3-(imidazol-4-yl)-2-oxopropyl phosphate + H2O. The protein operates within amino-acid biosynthesis; L-histidine biosynthesis; L-histidine from 5-phospho-alpha-D-ribose 1-diphosphate: step 6/9. In Nitrosomonas europaea (strain ATCC 19718 / CIP 103999 / KCTC 2705 / NBRC 14298), this protein is Imidazoleglycerol-phosphate dehydratase.